We begin with the raw amino-acid sequence, 369 residues long: tRNA/tmRNA (uracil-C(5))-methyltransferase (369 aa).

S-adenosyl-L-methionine contacts are provided by Gln-190, Tyr-218, Asn-223, Glu-239, and Asp-301. Cys-326 (nucleophile) is an active-site residue. Glu-360 (proton acceptor) is an active-site residue.

Belongs to the class I-like SAM-binding methyltransferase superfamily. RNA M5U methyltransferase family. TrmA subfamily.

The enzyme catalyses uridine(54) in tRNA + S-adenosyl-L-methionine = 5-methyluridine(54) in tRNA + S-adenosyl-L-homocysteine + H(+). It catalyses the reaction uridine(341) in tmRNA + S-adenosyl-L-methionine = 5-methyluridine(341) in tmRNA + S-adenosyl-L-homocysteine + H(+). Functionally, dual-specificity methyltransferase that catalyzes the formation of 5-methyluridine at position 54 (m5U54) in all tRNAs, and that of position 341 (m5U341) in tmRNA (transfer-mRNA). The polypeptide is tRNA/tmRNA (uracil-C(5))-methyltransferase (Vibrio atlanticus (strain LGP32) (Vibrio splendidus (strain Mel32))).